Reading from the N-terminus, the 230-residue chain is Sugar fermentation stimulation protein homolog (230 aa).

It belongs to the SfsA family.

The polypeptide is Sugar fermentation stimulation protein homolog (Clostridium kluyveri (strain NBRC 12016)).